A 435-amino-acid polypeptide reads, in one-letter code: GTPase Der (435 aa).

2 consecutive EngA-type G domains span residues 4–167 (PVVA…PAEK) and 175–350 (ISFS…DNQN). GTP contacts are provided by residues 10–17 (GQPNVGKS), 57–61 (DTGGI), 119–122 (NKAD), 181–188 (GRPNVGKS), 228–232 (DTAGI), and 293–296 (NKWD). The 85-residue stretch at 351 to 435 (QRIQSSVLND…PIKILPRKRK (85 aa)) folds into the KH-like domain.

Belongs to the TRAFAC class TrmE-Era-EngA-EngB-Septin-like GTPase superfamily. EngA (Der) GTPase family. In terms of assembly, associates with the 50S ribosomal subunit.

GTPase that plays an essential role in the late steps of ribosome biogenesis. In Lactobacillus acidophilus (strain ATCC 700396 / NCK56 / N2 / NCFM), this protein is GTPase Der.